The chain runs to 410 residues: Beta-arrestin-2 (410 aa).

Y48 carries the phosphotyrosine modification. 2 positions are modified to hydroxyproline; by PHD2: P176 and P181. The interval 241-410 is interaction with TRAF6; the sequence is ADICLFSTAQ…KDDDCDDQFC (170 aa). S361 carries the phosphoserine modification. Positions 378 to 410 are interaction with AP2B1; the sequence is DTNYATDDDIVFEDFARLRLKGMKDDDCDDQFC. T383 carries the phosphothreonine; by CaMK2 modification. Residues 386–396 carry the [DE]-X(1,2)-F-X-X-[FL]-X-X-X-R motif motif; sequence DIVFEDFARLR.

Belongs to the arrestin family. In terms of assembly, homooligomer; the self-association is mediated by InsP6-binding. Heterooligomer with ARRB1; the association is mediated by InsP6-binding. Interacts with ADRB2 and CHRM2. Interacts with PDE4A. Interacts with PDE4D. Interacts with MAPK10, MAPK1 and MAPK3. Interacts with DRD2. Interacts with FSHR. Interacts with CLTC. Interacts with HTR2C. Interacts with CCR5. Interacts with CXCR4. Interacts with SRC. Interacts with DUSP16; the interaction is interrupted by stimulation of AGTR1 and activation of MAPK10. Interacts with CHUK; the interaction is enhanced stimulation of ADRB2. Interacts with RELA. Interacts with MDM2; the interaction is enhanced by activation of GPCRs. Interacts with SLC9A5. Interacts with TRAF6. Interacts with IGF1R. Interacts with ENG. Interacts with KIR2DL1, KIR2DL3 and KIR2DL4. Interacts with LDLR. Interacts with AP2B1. Interacts with C5AR1. Interacts with RAF1. Interacts with MAP2K1. Interacts with MAPK1. Interacts with MAPK10; the interaction enhances MAPK10 activation by MAP3K5. Interacts with MAP2K4; the interaction is enhanced by presence of MAP3K5 and MAPK10. Interacts with MAP3K5. Interacts with AKT1. Interacts with IKBKB and MAP3K14. Interacts with SMO (activated). Interacts with GSK3A and GSK3B. Associates with protein phosphatase 2A (PP2A). Interacts with CXCR4; the interaction is dependent on C-terminal phosphorylation of CXCR4 and allows activation of MAPK1 and MAPK3. Interacts with GPR143. Interacts with HCK and CXCR1 (phosphorylated). Interacts with ACKR3 and ACKR4. Interacts with ARRDC1; the interaction is direct. Interacts with GPR61, GPR62 and GPR135. Interacts (via NACHT and LRR domains) with NLRP3; this interaction is direct and inducible by omega-3 polyunsaturated fatty acids (PUFAs). Interacts with FFAR4 (via C-terminus); this interaction is stimulated by long-chain fatty acids (LCFAs). Interacts with GPR35. Interacts with GPR84. Interacts with TIGIT; this interaction inhibits the NF-kappa-B pathway. Interacts with TGFBR3. In terms of processing, phosphorylated at Thr-383 in the cytoplasm; probably dephosphorylated at the plasma membrane. The phosphorylation does not regulate internalization and recycling of ADRB2, interaction with clathrin or AP2B1. Post-translationally, the ubiquitination status appears to regulate the formation and trafficking of beta-arrestin-GPCR complexes and signaling. Ubiquitination appears to occur GPCR-specific. Ubiquitinated by MDM2; the ubiquitination is required for rapid internalization of ADRB2. Deubiquitinated by USP33; the deubiquitination leads to a dissociation of the beta-arrestin-GPCR complex. Stimulation of a class A GPCR, such as ADRB2, induces transient ubiquitination and subsequently promotes association with USP33. Stimulation of a class B GPCR promotes a sustained ubiquitination. Deubiquitinated by USP20; allowing USP20 to deubiquitinate TRAF6 leading to inhibition of NF-kappa-B signaling. Hydroxylation by PHD2 modulates the rate of internalization by slowing down recruitment to the plasma membrane and inhibiting subsequent co-internalization with class A receptors. As to expression, predominantly localized in neuronal tissues and in the spleen.

It localises to the cytoplasm. It is found in the nucleus. Its subcellular location is the cell membrane. The protein resides in the membrane. The protein localises to the clathrin-coated pit. It localises to the cytoplasmic vesicle. Functions in regulating agonist-mediated G-protein coupled receptor (GPCR) signaling by mediating both receptor desensitization and resensitization processes. During homologous desensitization, beta-arrestins bind to the GPRK-phosphorylated receptor and sterically preclude its coupling to the cognate G-protein; the binding appears to require additional receptor determinants exposed only in the active receptor conformation. The beta-arrestins target many receptors for internalization by acting as endocytic adapters (CLASPs, clathrin-associated sorting proteins) and recruiting the GPRCs to the adapter protein 2 complex 2 (AP-2) in clathrin-coated pits (CCPs). However, the extent of beta-arrestin involvement appears to vary significantly depending on the receptor, agonist and cell type. Internalized arrestin-receptor complexes traffic to intracellular endosomes, where they remain uncoupled from G-proteins. Two different modes of arrestin-mediated internalization occur. Class A receptors, like ADRB2, OPRM1, ENDRA, D1AR and ADRA1B dissociate from beta-arrestin at or near the plasma membrane and undergo rapid recycling. Class B receptors, like AVPR2, AGTR1, NTSR1, TRHR and TACR1 internalize as a complex with arrestin and traffic with it to endosomal vesicles, presumably as desensitized receptors, for extended periods of time. Receptor resensitization then requires that receptor-bound arrestin is removed so that the receptor can be dephosphorylated and returned to the plasma membrane. Mediates endocytosis of CCR7 following ligation of CCL19 but not CCL21. Involved in internalization of P2RY1, P2RY4, P2RY6 and P2RY11 and ATP-stimulated internalization of P2RY2. Involved in phosphorylation-dependent internalization of OPRD1 and subsequent recycling or degradation. Involved in ubiquitination of IGF1R. Beta-arrestins function as multivalent adapter proteins that can switch the GPCR from a G-protein signaling mode that transmits short-lived signals from the plasma membrane via small molecule second messengers and ion channels to a beta-arrestin signaling mode that transmits a distinct set of signals that are initiated as the receptor internalizes and transits the intracellular compartment. Acts as a signaling scaffold for MAPK pathways such as MAPK1/3 (ERK1/2) and MAPK10 (JNK3). ERK1/2 and JNK3 activated by the beta-arrestin scaffold are largely excluded from the nucleus and confined to cytoplasmic locations such as endocytic vesicles, also called beta-arrestin signalosomes. Acts as a signaling scaffold for the AKT1 pathway. GPCRs for which the beta-arrestin-mediated signaling relies on both ARRB1 and ARRB2 (codependent regulation) include ADRB2, F2RL1 and PTH1R. For some GPCRs the beta-arrestin-mediated signaling relies on either ARRB1 or ARRB2 and is inhibited by the other respective beta-arrestin form (reciprocal regulation). Increases ERK1/2 signaling in AGTR1- and AVPR2-mediated activation (reciprocal regulation). Involved in CCR7-mediated ERK1/2 signaling involving ligand CCL19. Is involved in type-1A angiotensin II receptor/AGTR1-mediated ERK activity. Is involved in type-1A angiotensin II receptor/AGTR1-mediated MAPK10 activity. Is involved in dopamine-stimulated AKT1 activity in the striatum by disrupting the association of AKT1 with its negative regulator PP2A. Involved in AGTR1-mediated chemotaxis. Appears to function as signaling scaffold involved in regulation of MIP-1-beta-stimulated CCR5-dependent chemotaxis. Involved in attenuation of NF-kappa-B-dependent transcription in response to GPCR or cytokine stimulation by interacting with and stabilizing CHUK. Suppresses UV-induced NF-kappa-B-dependent activation by interacting with CHUK. The function is promoted by stimulation of ADRB2 and dephosphorylation of ARRB2. Involved in IL8-mediated granule release in neutrophils. Involved in p53/TP53-mediated apoptosis by regulating MDM2 and reducing the MDM2-mediated degradation of p53/TP53. May serve as nuclear messenger for GPCRs. Upon stimulation of OR1D2, may be involved in regulation of gene expression during the early processes of fertilization. Also involved in regulation of receptors other than GPCRs. Involved in endocytosis of TGFBR2 and TGFBR3 and down-regulates TGF-beta signaling such as NF-kappa-B activation. Involved in endocytosis of low-density lipoprotein receptor/LDLR. Involved in endocytosis of smoothened homolog/Smo, which also requires GRK2. Involved in endocytosis of SLC9A5. Involved in endocytosis of ENG and subsequent TGF-beta-mediated ERK activation and migration of epithelial cells. Involved in Toll-like receptor and IL-1 receptor signaling through the interaction with TRAF6 which prevents TRAF6 autoubiquitination and oligomerization required for activation of NF-kappa-B and JUN. Involved in insulin resistance by acting as insulin-induced signaling scaffold for SRC, AKT1 and INSR. Involved in regulation of inhibitory signaling of natural killer cells by recruiting PTPN6 and PTPN11 to KIR2DL1. Involved in the internalization of the atypical chemokine receptor ACKR3. Acts as an adapter protein coupling FFAR4 receptor to specific downstream signaling pathways, as well as mediating receptor endocytosis. During the activation step of NLRP3 inflammasome, directly associates with NLRP3 leading to inhibition of pro-inflammatory cytokine release and inhibition of inflammation. The polypeptide is Beta-arrestin-2 (Arrb2) (Rattus norvegicus (Rat)).